The primary structure comprises 267 residues: Myb-related protein Hv1 (267 aa).

HTH myb-type domains are found at residues 9-61 (KAHT…INYL) and 62-116 (RPDL…RRKL). DNA-binding regions (H-T-H motif) lie at residues 37–61 (WRSL…INYL) and 89–112 (WSLI…NTHI).

Germinating seed and apical meristem of shoot and root.

The protein localises to the nucleus. Possible transcription activator in response to an external signal. May be involved in the regulation of flavonoid biosynthesis. This chain is Myb-related protein Hv1 (MYB1), found in Hordeum vulgare (Barley).